The sequence spans 117 residues: Acylphosphatase (117 aa).

One can recognise an Acylphosphatase-like domain in the interval 21–107; that stretch reads RWRFRIRGLV…TGADWFEIRP (87 aa). Active-site residues include R36 and N54.

The protein belongs to the acylphosphatase family.

The enzyme catalyses an acyl phosphate + H2O = a carboxylate + phosphate + H(+). The chain is Acylphosphatase (acyP) from Synechococcus sp. (strain RCC307).